Reading from the N-terminus, the 670-residue chain is DNA ligase (670 aa).

NAD(+) is bound by residues 32–36 (DAEYD), 81–82 (SL), and Glu-113. Lys-115 functions as the N6-AMP-lysine intermediate in the catalytic mechanism. NAD(+)-binding residues include Arg-136, Glu-173, Lys-290, and Lys-314. Positions 408, 411, 426, and 432 each coordinate Zn(2+). In terms of domain architecture, BRCT spans 592–670 (EIDSPFAGKT…EAEMIRLLGE (79 aa)).

Belongs to the NAD-dependent DNA ligase family. LigA subfamily. The cofactor is Mg(2+). Mn(2+) is required as a cofactor.

It catalyses the reaction NAD(+) + (deoxyribonucleotide)n-3'-hydroxyl + 5'-phospho-(deoxyribonucleotide)m = (deoxyribonucleotide)n+m + AMP + beta-nicotinamide D-nucleotide.. Functionally, DNA ligase that catalyzes the formation of phosphodiester linkages between 5'-phosphoryl and 3'-hydroxyl groups in double-stranded DNA using NAD as a coenzyme and as the energy source for the reaction. It is essential for DNA replication and repair of damaged DNA. The sequence is that of DNA ligase from Yersinia pseudotuberculosis serotype O:1b (strain IP 31758).